The sequence spans 582 residues: Formate--tetrahydrofolate ligase (582 aa).

65 to 72 contacts ATP; that stretch reads TPLGEGKT.

It belongs to the formate--tetrahydrofolate ligase family.

It carries out the reaction (6S)-5,6,7,8-tetrahydrofolate + formate + ATP = (6R)-10-formyltetrahydrofolate + ADP + phosphate. It functions in the pathway one-carbon metabolism; tetrahydrofolate interconversion. This chain is Formate--tetrahydrofolate ligase, found in Vibrio vulnificus (strain CMCP6).